We begin with the raw amino-acid sequence, 556 residues long: 2-succinyl-5-enolpyruvyl-6-hydroxy-3-cyclohexene-1-carboxylate synthase (556 aa).

This sequence belongs to the TPP enzyme family. MenD subfamily. As to quaternary structure, homodimer. Mg(2+) is required as a cofactor. It depends on Mn(2+) as a cofactor. Requires thiamine diphosphate as cofactor.

The enzyme catalyses isochorismate + 2-oxoglutarate + H(+) = 5-enolpyruvoyl-6-hydroxy-2-succinyl-cyclohex-3-ene-1-carboxylate + CO2. It functions in the pathway quinol/quinone metabolism; 1,4-dihydroxy-2-naphthoate biosynthesis; 1,4-dihydroxy-2-naphthoate from chorismate: step 2/7. It participates in quinol/quinone metabolism; menaquinone biosynthesis. Functionally, catalyzes the thiamine diphosphate-dependent decarboxylation of 2-oxoglutarate and the subsequent addition of the resulting succinic semialdehyde-thiamine pyrophosphate anion to isochorismate to yield 2-succinyl-5-enolpyruvyl-6-hydroxy-3-cyclohexene-1-carboxylate (SEPHCHC). The sequence is that of 2-succinyl-5-enolpyruvyl-6-hydroxy-3-cyclohexene-1-carboxylate synthase from Shigella sonnei (strain Ss046).